The following is a 937-amino-acid chain: Protocadherin alpha-7 (937 aa).

Residues 1-29 (MVCPNGYDPGGRHLLLFIIILAAWEAGRG) form the signal peptide. Cadherin domains are found at residues 30–133 (QLHY…PPVF), 134–242 (PATQ…APVF), 243–350 (DRTL…APQL), 351–455 (TLTS…APAF), 456–565 (AQPE…APAL), and 581–678 (VPRS…APKA). Topologically, residues 30-697 (QLHYSVPEEA…GPETELVDVN (668 aa)) are extracellular. A disulfide bridge links cysteine 96 with cysteine 102. 2 N-linked (GlcNAc...) asparagine glycosylation sites follow: asparagine 254 and asparagine 265. The N-linked (GlcNAc...) asparagine glycan is linked to asparagine 548. A helical transmembrane segment spans residues 698 to 718 (VYLIIAICAVSSLLVLTLLLY). Residues 719–937 (TALRCSAPSS…GNSTTDNSDQ (219 aa)) are Cytoplasmic-facing. Disordered regions lie at residues 756–795 (QRVC…DWRY) and 817–843 (AGPG…EVSP). PXXP repeat units follow at residues 774–777 (PSLP), 786–789 (PRQP), 819–822 (PGGP), 860–863 (PGNP), and 878–881 (PGSP). Positions 774–881 (PSLPQGPSST…PDKFIIPGSP (108 aa)) are 5 X 4 AA repeats of P-X-X-P. Residues 775-787 (SLPQGPSSTDNPR) show a composition bias toward polar residues. The interval 888–937 (QEPANSQIDKSDFITFGKKEETKKKKKKKKGNKTQEKKEKGNSTTDNSDQ) is disordered. Over residues 896–910 (DKSDFITFGKKEETK) the composition is skewed to basic and acidic residues.

In terms of assembly, forms homodimers in trans (molecules expressed by two different cells). Forms promiscuous heterodimers in cis (at the plasma membrane of the same cell) with other protocadherins.

It localises to the cell membrane. Calcium-dependent cell-adhesion protein involved in cells self-recognition and non-self discrimination. Thereby, it is involved in the establishment and maintenance of specific neuronal connections in the brain. This is Protocadherin alpha-7 from Pan troglodytes (Chimpanzee).